The sequence spans 235 residues: KNMITGAAQMDGGILVVSAADGPMPQTREHILLAKQVGVPSLVVFLNKEDQVDDAELLELVELEVRELLSIYDFPGDDIPIVIGSALKAVEALTATPTTKKGDNEWVDKILKLMDEVDEYIPTPEREIDKPFLMAVEDVFSITGRGTVATGRIERGKIKVGETVELVGIRNTRSTTVTGVEMFQKVLEEGMAGDNVGLLLRGIQKEDIERGMVIAKPGSITPHTQFEGEVYVLTK.

Residues 1-125 form the tr-type G domain; the sequence is KNMITGAAQM…EVDEYIPTPE (125 aa). A GTP-binding site is contributed by 47–50; sequence NKED.

It belongs to the TRAFAC class translation factor GTPase superfamily. Classic translation factor GTPase family. EF-Tu/EF-1A subfamily. As to quaternary structure, monomer.

Its subcellular location is the cytoplasm. It catalyses the reaction GTP + H2O = GDP + phosphate + H(+). In terms of biological role, GTP hydrolase that promotes the GTP-dependent binding of aminoacyl-tRNA to the A-site of ribosomes during protein biosynthesis. This is Elongation factor Tu (tufA) from Gloeothece membranacea (strain PCC 6501 / SAG 26.84).